The following is a 153-amino-acid chain: Ribosome maturation factor RimP (153 aa).

The protein belongs to the RimP family.

The protein resides in the cytoplasm. In terms of biological role, required for maturation of 30S ribosomal subunits. This Nostoc sp. (strain PCC 7120 / SAG 25.82 / UTEX 2576) protein is Ribosome maturation factor RimP.